Reading from the N-terminus, the 113-residue chain is MNTVRVTFLLVFVLAVSLGQADKDENRMEMQEKTEQGNSYLDFAENLLLQKLEELEAKLLEEDSEESRNSRQKRCIGEGVPCDENDPRCCSGLVCLKPTLHGIWYKSYYCYKK.

Residues 1–21 (MNTVRVTFLLVFVLAVSLGQA) form the signal peptide. Residues 22–74 (DKDENRMEMQEKTEQGNSYLDFAENLLLQKLEELEAKLLEEDSEESRNSRQKR) constitute a propeptide that is removed on maturation. Over residues 60 to 69 (LEEDSEESRN) the composition is skewed to basic and acidic residues. Positions 60–83 (LEEDSEESRNSRQKRCIGEGVPCD) are disordered. 3 disulfides stabilise this stretch: C75-C90, C82-C95, and C89-C110.

The protein belongs to the neurotoxin 14 (magi-1) family. 01 (HNTX-16) subfamily. As to expression, expressed by the venom gland.

Its subcellular location is the secreted. Functionally, probable ion channel inhibitor. The polypeptide is U11-theraphotoxin-Hhn1a (Cyriopagopus hainanus (Chinese bird spider)).